Reading from the N-terminus, the 54-residue chain is UPF0391 membrane protein Pmen_0080 (54 aa).

The next 2 membrane-spanning stretches (helical) occupy residues 4-24 and 28-48; these read WALT…GGIA and AGIA…SFIM.

The protein belongs to the UPF0391 family.

It is found in the cell membrane. The sequence is that of UPF0391 membrane protein Pmen_0080 from Ectopseudomonas mendocina (strain ymp) (Pseudomonas mendocina).